Here is a 359-residue protein sequence, read N- to C-terminus: Histidinol-phosphate aminotransferase (359 aa).

Position 217 is an N6-(pyridoxal phosphate)lysine (K217).

The protein belongs to the class-II pyridoxal-phosphate-dependent aminotransferase family. Histidinol-phosphate aminotransferase subfamily. Homodimer. Pyridoxal 5'-phosphate is required as a cofactor.

It carries out the reaction L-histidinol phosphate + 2-oxoglutarate = 3-(imidazol-4-yl)-2-oxopropyl phosphate + L-glutamate. Its pathway is amino-acid biosynthesis; L-histidine biosynthesis; L-histidine from 5-phospho-alpha-D-ribose 1-diphosphate: step 7/9. This Salmonella heidelberg (strain SL476) protein is Histidinol-phosphate aminotransferase.